The chain runs to 125 residues: Basic leucine zipper transcriptional factor ATF-like (125 aa).

Residues 1–14 (MPHSSDSSDSSFSR) are compositionally biased toward low complexity. The interval 1 to 58 (MPHSSDSSDSSFSRSPPPGKQDSSDDVRRVQRREKNRIAAQKSRQRQTQKADTLHLES) is disordered. A bZIP domain is found at 26-89 (DVRRVQRREK…KYFTSVLNSH (64 aa)). Residues 28 to 50 (RRVQRREKNRIAAQKSRQRQTQK) are basic motif. Serine 43 carries the post-translational modification Phosphoserine. A Phosphothreonine modification is found at threonine 48. A leucine-zipper region spans residues 54-75 (LHLESEDLEKQNAALRKEIKQL).

It belongs to the bZIP family. In terms of assembly, heterodimer; mainly heterodimerizes with JUNB. The BATF-JUNB heterodimer interacts with IRF4 and IRF8. Interacts (via bZIP domain) with IRF4 and IRF8; the interaction is direct. Also forms heterodimers with JUN and JUND. Also interacts with IFI35. In terms of processing, phosphorylated on serine and threonine residues and at least one tyrosine residue. Phosphorylation at Ser-43 inhibit DNA binding activity and transforms it as a negative regulator of AP-1 mediated transcription. Phosphorylated. As to expression, expressed at highest levels in lung, and at lower levels in placenta, liver, kidney, spleen, and peripheral blood. Detected in SW480 colorectal cancer cell line and several hematopoietic tumor cell lines, including Raji Burkitt's lymphoma. Strongly expressed in mature B- and T-lymphocytes. Also expressed in moderate levels in lymph node and appendix and at low levels in thymus and bone marrow.

Its subcellular location is the nucleus. The protein localises to the cytoplasm. Functionally, AP-1 family transcription factor that controls the differentiation of lineage-specific cells in the immune system: specifically mediates the differentiation of T-helper 17 cells (Th17), follicular T-helper cells (TfH), CD8(+) dendritic cells and class-switch recombination (CSR) in B-cells. Acts via the formation of a heterodimer with JUNB that recognizes and binds DNA sequence 5'-TGA[CG]TCA-3'. The BATF-JUNB heterodimer also forms a complex with IRF4 (or IRF8) in immune cells, leading to recognition of AICE sequence (5'-TGAnTCA/GAAA-3'), an immune-specific regulatory element, followed by cooperative binding of BATF and IRF4 (or IRF8) and activation of genes. Controls differentiation of T-helper cells producing interleukin-17 (Th17 cells) by binding to Th17-associated gene promoters: regulates expression of the transcription factor RORC itself and RORC target genes such as IL17 (IL17A or IL17B). Also involved in differentiation of follicular T-helper cells (TfH) by directing expression of BCL6 and MAF. In B-cells, involved in class-switch recombination (CSR) by controlling the expression of both AICDA and of germline transcripts of the intervening heavy-chain region and constant heavy-chain region (I(H)-C(H)). Following infection, can participate in CD8(+) dendritic cell differentiation via interaction with IRF4 and IRF8 to mediate cooperative gene activation. Regulates effector CD8(+) T-cell differentiation by regulating expression of SIRT1. Following DNA damage, part of a differentiation checkpoint that limits self-renewal of hematopoietic stem cells (HSCs): up-regulated by STAT3, leading to differentiation of HSCs, thereby restricting self-renewal of HSCs. This chain is Basic leucine zipper transcriptional factor ATF-like (BATF), found in Homo sapiens (Human).